Here is a 214-residue protein sequence, read N- to C-terminus: Thymidylate kinase (214 aa).

10–17 provides a ligand contact to ATP; that stretch reads GPDGAGKT.

Belongs to the thymidylate kinase family.

The enzyme catalyses dTMP + ATP = dTDP + ADP. Phosphorylation of dTMP to form dTDP in both de novo and salvage pathways of dTTP synthesis. The protein is Thymidylate kinase of Latilactobacillus sakei subsp. sakei (strain 23K) (Lactobacillus sakei subsp. sakei).